We begin with the raw amino-acid sequence, 225 residues long: tRNA (guanine-N(1)-)-methyltransferase (225 aa).

S-adenosyl-L-methionine contacts are provided by residues glycine 112 and 132–137 (IGDYVL).

The protein belongs to the RNA methyltransferase TrmD family. As to quaternary structure, homodimer.

It is found in the cytoplasm. It carries out the reaction guanosine(37) in tRNA + S-adenosyl-L-methionine = N(1)-methylguanosine(37) in tRNA + S-adenosyl-L-homocysteine + H(+). Its function is as follows. Specifically methylates guanosine-37 in various tRNAs. The chain is tRNA (guanine-N(1)-)-methyltransferase from Porphyromonas gingivalis (strain ATCC 33277 / DSM 20709 / CIP 103683 / JCM 12257 / NCTC 11834 / 2561).